We begin with the raw amino-acid sequence, 195 residues long: Probable nicotinate-nucleotide adenylyltransferase (195 aa).

Belongs to the NadD family.

The enzyme catalyses nicotinate beta-D-ribonucleotide + ATP + H(+) = deamido-NAD(+) + diphosphate. Its pathway is cofactor biosynthesis; NAD(+) biosynthesis; deamido-NAD(+) from nicotinate D-ribonucleotide: step 1/1. Its function is as follows. Catalyzes the reversible adenylation of nicotinate mononucleotide (NaMN) to nicotinic acid adenine dinucleotide (NaAD). The polypeptide is Probable nicotinate-nucleotide adenylyltransferase (Chlorobaculum parvum (strain DSM 263 / NCIMB 8327) (Chlorobium vibrioforme subsp. thiosulfatophilum)).